Consider the following 430-residue polypeptide: Adenylosuccinate synthetase (430 aa).

GTP-binding positions include 17 to 23 (GDEGKGK) and 45 to 47 (GHT). The active-site Proton acceptor is aspartate 18. Residues aspartate 18 and glycine 45 each coordinate Mg(2+). IMP-binding positions include 18–21 (DEGK), 43–46 (NAGH), threonine 139, arginine 153, asparagine 229, threonine 244, and arginine 308. Histidine 46 (proton donor) is an active-site residue. 304–310 (TVTGRRR) is a substrate binding site. Residues arginine 310, 336-338 (KLD), and 418-420 (GVG) contribute to the GTP site.

Belongs to the adenylosuccinate synthetase family. In terms of assembly, homodimer. It depends on Mg(2+) as a cofactor.

Its subcellular location is the cytoplasm. The enzyme catalyses IMP + L-aspartate + GTP = N(6)-(1,2-dicarboxyethyl)-AMP + GDP + phosphate + 2 H(+). It functions in the pathway purine metabolism; AMP biosynthesis via de novo pathway; AMP from IMP: step 1/2. In terms of biological role, plays an important role in the de novo pathway and in the salvage pathway of purine nucleotide biosynthesis. Catalyzes the first committed step in the biosynthesis of AMP from IMP. This is Adenylosuccinate synthetase from Cryptococcus neoformans var. neoformans serotype D (strain B-3501A) (Filobasidiella neoformans).